A 262-amino-acid chain; its full sequence is uncharacterized protein (262 aa).

The region spanning 5 to 223 is the ABC transporter domain; sequence IKVENLTKYF…MAYIEYLDNG (219 aa). 37–44 provides a ligand contact to ATP; that stretch reads GHNGAGKT.

The protein belongs to the ABC transporter superfamily.

This is an uncharacterized protein from Methanocaldococcus jannaschii (strain ATCC 43067 / DSM 2661 / JAL-1 / JCM 10045 / NBRC 100440) (Methanococcus jannaschii).